A 320-amino-acid chain; its full sequence is MLNKRNPQLNAHGELIHLLSIEGLPKAVLTQILDTAGTFLSVNDREVKKVPLLRGKSVFNLFFENSTRTRTTFEIAAKRLSADVINLDIARSSTAKGESLLDTIANLSAMHADMFVVRHAESGAPYLIAQHVAPHVHVVNAGDGRHAHPTQGLLDMYTIRHYKKDFSNLVVAIVGDIVHSRVARSDIHALTTLGAAEVRAVGPRTLVPADLKHMGVRVCHDMSEGIRDADVIIMLRLQNERMSGALLPSAGEYFKSFGLTEEKLALARPDAIVMHPGPINRGVEIDSSVVDGRQSVILPQVTFGIAVRMAVMSTIAGNNA.

Carbamoyl phosphate contacts are provided by Arg68 and Thr69. Residue Lys96 participates in L-aspartate binding. Carbamoyl phosphate-binding residues include Arg118, His148, and Gln151. 2 residues coordinate L-aspartate: Arg181 and Arg236. Residues Gly277 and Pro278 each coordinate carbamoyl phosphate.

It belongs to the aspartate/ornithine carbamoyltransferase superfamily. ATCase family. Heterododecamer (2C3:3R2) of six catalytic PyrB chains organized as two trimers (C3), and six regulatory PyrI chains organized as three dimers (R2).

The catalysed reaction is carbamoyl phosphate + L-aspartate = N-carbamoyl-L-aspartate + phosphate + H(+). It participates in pyrimidine metabolism; UMP biosynthesis via de novo pathway; (S)-dihydroorotate from bicarbonate: step 2/3. Its function is as follows. Catalyzes the condensation of carbamoyl phosphate and aspartate to form carbamoyl aspartate and inorganic phosphate, the committed step in the de novo pyrimidine nucleotide biosynthesis pathway. The chain is Aspartate carbamoyltransferase catalytic subunit from Methylibium petroleiphilum (strain ATCC BAA-1232 / LMG 22953 / PM1).